The primary structure comprises 25 residues: Cysteine protease inhibitor 2 (25 aa).

It belongs to the protease inhibitor I3 (leguminous Kunitz-type inhibitor) family. Cortex of tuber.

Its function is as follows. Inhibitor of subtilisin. Inhibits moderately trypsin and chymotrypsin (serine proteases). May protect the plant by inhibiting proteases of invading organisms. The sequence is that of Cysteine protease inhibitor 2 from Solanum tuberosum (Potato).